The chain runs to 180 residues: Large ribosomal subunit protein uL5c (180 aa).

It belongs to the universal ribosomal protein uL5 family. Part of the 50S ribosomal subunit; contacts the 5S rRNA.

The protein localises to the plastid. Its subcellular location is the chloroplast. Its function is as follows. Binds 5S rRNA, forms part of the central protuberance of the 50S subunit. This Chlorella vulgaris (Green alga) protein is Large ribosomal subunit protein uL5c (rpl5).